The following is a 635-amino-acid chain: Threonine--tRNA ligase (635 aa).

Residues 1-58 (MIRVICNNETVELPKGATAADFASKIKNSHYFAGVVINDQIKDLSTTLNEGDTLRFVT) form the TGS domain. The segment at 237–528 (DHRVLGAKLD…LIEHFKGKFP (292 aa)) is catalytic. Zn(2+) is bound by residues Cys328, His379, and His505.

This sequence belongs to the class-II aminoacyl-tRNA synthetase family. As to quaternary structure, homodimer. Zn(2+) serves as cofactor.

The protein resides in the cytoplasm. The catalysed reaction is tRNA(Thr) + L-threonine + ATP = L-threonyl-tRNA(Thr) + AMP + diphosphate + H(+). Catalyzes the attachment of threonine to tRNA(Thr) in a two-step reaction: L-threonine is first activated by ATP to form Thr-AMP and then transferred to the acceptor end of tRNA(Thr). Also edits incorrectly charged L-seryl-tRNA(Thr). This chain is Threonine--tRNA ligase, found in Chlamydia caviae (strain ATCC VR-813 / DSM 19441 / 03DC25 / GPIC) (Chlamydophila caviae).